A 1403-amino-acid polypeptide reads, in one-letter code: Sushi, nidogen and EGF-like domain-containing protein 1 (1403 aa).

An N-terminal signal peptide occupies residues 1-24 (MRLGAAWALLLAAALGLGTRGVRA). The NIDO domain occupies 103 to 258 (AFWADVDNRR…GRWAFRIDDA (156 aa)). 3 EGF-like domains span residues 268–309 (TTSV…RRCH), 311–347 (DVNE…PTCE), and 349–385 (AQSP…ATCE). 18 cysteine pairs are disulfide-bonded: C272-C284, C278-C297, C299-C308, C315-C326, C320-C335, C337-C346, C353-C364, C358-C373, C375-C384, C391-C402, C396-C411, C413-C422, C433-C444, C438-C453, C455-C464, C472-C480, C474-C488, and C490-C499. Residue N292 is glycosylated (N-linked (GlcNAc...) asparagine). In terms of domain architecture, EGF-like 4; calcium-binding spans 387 to 423 (DVDECSSDPCQNGGSCVDLVGNYSCICVEPFEGPQCE). The N-linked (GlcNAc...) asparagine glycan is linked to N408. EGF-like domains follow at residues 429–465 (VPSP…LDCR) and 468–500 (ILND…LLCE). N484 carries N-linked (GlcNAc...) asparagine glycosylation. N-linked (GlcNAc...) asparagine glycosylation occurs at N536. 4 consecutive EGF-like domains span residues 541–577 (LPSP…RHCE), 580–616 (RPHL…RHCE), 619–655 (KPDS…RHCE), and 657–693 (APSP…HRCQ). Cystine bridges form between C545–C556, C550–C565, C567–C576, C584–C595, C589–C604, C606–C615, C623–C634, C628–C643, C645–C654, C661–C672, C666–C681, C683–C692, C698–C739, C724–C751, C757–C768, C762–C777, C779–C788, C795–C806, C800–C815, C817–C826, C833–C844, C838–C853, C855–C864, C871–C882, C876–C891, and C893–C902. A Sushi domain is found at 696–753 (VDCGHPEEVEHATMRFNGTHVGSVALYTCEPGFSLSALSHIRVCQPQGVWSQPPQCIE). Residue N712 is glycosylated (N-linked (GlcNAc...) asparagine). In terms of domain architecture, EGF-like 11; calcium-binding spans 753-789 (EVDECRSQPCLHGGSCQDLIADYQCLCSPGYEGVHCE). An EGF-like 12; calcium-binding domain is found at 791–827 (ETDECQAQPCRNGGSCRDLPRAFICQCPEGFVGIHCE). EGF-like domains are found at residues 829-865 (EVDA…YNCE) and 867-903 (VSDP…KDCT). N886 carries an N-linked (GlcNAc...) asparagine glycan. 3 consecutive Fibronectin type-III domains span residues 908–1006 (PPTA…TRPR), 1007–1105 (PIED…TRPL), and 1106–1200 (PPAN…SPRD). N977, N1015, N1109, N1139, and N1298 each carry an N-linked (GlcNAc...) asparagine glycan. In terms of domain architecture, EGF-like 15 spans 1306-1342 (TPGSCSEDACQNGGTCVPGADAHSCDCRPGFKGRHCE). 3 disulfide bridges follow: C1310-C1321, C1315-C1330, and C1332-C1341.

Post-translationally, phosphorylated on serine and threonine residues. N-glycosylated. In terms of tissue distribution, expressed in lung.

The protein localises to the secreted. It is found in the extracellular space. It localises to the extracellular matrix. The protein is Sushi, nidogen and EGF-like domain-containing protein 1 of Mus musculus (Mouse).